Consider the following 415-residue polypeptide: MVDHLLPVDETFSSPKCSVGYLGDRLASRQPYHMLPSPISEDDSDVSSPCSCASPDSQAFCSCYSAGPGPEAQGSILDFLLSRATLGSGGGSGGIGDSSGPVTWGSWRRASVPVKEEHFCFPEFLSGDTDDVSRPFQPTLEEIEEFLEENMEAEVKEAPENGSRDLETCSQLSAGSHRSHLHPESAGRERCTPPPGGTSGGGAQSAGEGPAHDGPVPVLLQIQPVAVKQEAGTGPASPGQAPESVKVAQLLVNIQGQTFALLPQVVPSSNLNLPSKFVRIAPVPIAAKPIGSGSLGPGPAGLLVGQKFPKNPAAELLKMHKCTFPGCSKMYTKSSHLKAHLRRHTGEKPFACTWPGCGWRFSRSDELSRHRRSHSGVKPYQCPVCEKKFARSDHLSKHIKVHRFPRSSRAVRAIN.

The 9aaTAD signature appears at 75 to 83 (SILDFLLSR). The interval 172 to 216 (LSAGSHRSHLHPESAGRERCTPPPGGTSGGGAQSAGEGPAHDGPV) is disordered. Basic and acidic residues predominate over residues 181 to 191 (LHPESAGRERC). 3 C2H2-type zinc fingers span residues 320–344 (HKCT…LRRH), 350–374 (FACT…RRSH), and 380–402 (YQCP…IKVH).

It belongs to the Sp1 C2H2-type zinc-finger protein family. Interacts with MYOCD. Interacts with EP300. As to expression, expressed in aortic smooth muscle cells.

It localises to the nucleus. Its function is as follows. Transcriptional regulator that binds to the GA element of the CLCNKA promoter. Binds to the KCNIP2 promoter and regulates KCNIP2 circadian expression in the heart. Is a repressor of CCN2 expression, involved in the control of cardiac fibrosis. Is also involved in the control of cardiac hypertrophy acting through the inhibition of MEF2A, GATA4 and MYOCD activity. Is a negative regulator of TP53 acetylation. Inhibits NF-kappa-B activation through repression of EP300-dependent RELA acetylation. Involved in podocyte differentiation. This chain is Krueppel-like factor 15 (Klf15), found in Mus musculus (Mouse).